We begin with the raw amino-acid sequence, 255 residues long: Type III pantothenate kinase (255 aa).

7–14 (DVGNTRLK) is an ATP binding site. Substrate is bound by residues Tyr96 and 103–106 (GADR). Asp105 acts as the Proton acceptor in catalysis. Residue Thr133 participates in ATP binding. Substrate is bound at residue Thr183.

Belongs to the type III pantothenate kinase family. In terms of assembly, homodimer. NH4(+) is required as a cofactor. It depends on K(+) as a cofactor.

The protein localises to the cytoplasm. It carries out the reaction (R)-pantothenate + ATP = (R)-4'-phosphopantothenate + ADP + H(+). Its pathway is cofactor biosynthesis; coenzyme A biosynthesis; CoA from (R)-pantothenate: step 1/5. Catalyzes the phosphorylation of pantothenate (Pan), the first step in CoA biosynthesis. This chain is Type III pantothenate kinase, found in Polaromonas sp. (strain JS666 / ATCC BAA-500).